The primary structure comprises 248 residues: Killer cell lectin-like receptor subfamily I member 2 (248 aa).

Residues 1–79 (MHKKKHIKHG…GIDPWLTTWQ (79 aa)) lie on the Cytoplasmic side of the membrane. Residues 19 to 44 (IGTKSPTFQEKQRPSKTDQRSTVWRE) form a disordered region. A compositionally biased stretch (basic and acidic residues) spans 28 to 44 (EKQRPSKTDQRSTVWRE). A helical; Signal-anchor for type II membrane protein membrane pass occupies residues 80–100 (MITVILATLCIILVTKVGFLI). Topologically, residues 101 to 248 (PSLFSKGEKQ…KKTYICEFNI (148 aa)) are extracellular. Intrachain disulfides connect cysteine 132–cysteine 145, cysteine 161–cysteine 244, and cysteine 223–cysteine 236. One can recognise a C-type lectin domain in the interval 139 to 245 (FGNNFYCVFR…CSAKKTYICE (107 aa)). N-linked (GlcNAc...) asparagine glycans are attached at residues asparagine 197, asparagine 214, and asparagine 220.

As to quaternary structure, heterodimer with KLRE1. As to expression, expressed in natural killer (NK) cells.

Its subcellular location is the cell membrane. Its function is as follows. Lectin-like receptor for natural killer (NK) cells. Heterodimer formation with KLRE1 mediates NK cell cytolytic activity. This chain is Killer cell lectin-like receptor subfamily I member 2, found in Mus musculus (Mouse).